Consider the following 235-residue polypeptide: Small ribosomal subunit protein eS4 (235 aa).

Positions 38–101 (IPLLVLVRDF…EKSYRILFDE (64 aa)) constitute an S4 RNA-binding domain.

Belongs to the eukaryotic ribosomal protein eS4 family.

The polypeptide is Small ribosomal subunit protein eS4 (rps4e) (Archaeoglobus fulgidus (strain ATCC 49558 / DSM 4304 / JCM 9628 / NBRC 100126 / VC-16)).